Here is a 332-residue protein sequence, read N- to C-terminus: Formamidase (332 aa).

The CN hydrolase domain maps to 14–259; sequence FLTALIQYPV…WEIVTAEVYP (246 aa). Residue E60 is the Proton acceptor of the active site. K132 functions as the Proton donor in the catalytic mechanism. C165 acts as the Nucleophile in catalysis.

It belongs to the carbon-nitrogen hydrolase superfamily. Aliphatic amidase family.

It catalyses the reaction formamide + H2O = formate + NH4(+). Its function is as follows. Is an aliphatic amidase with a restricted substrate specificity, as it only hydrolyzes formamide. This chain is Formamidase, found in Bacillus cereus (strain ZK / E33L).